The following is a 448-amino-acid chain: Serine/threonine-protein phosphatase 2A regulatory subunit B'' subunit gamma (448 aa).

2 consecutive EF-hand domains span residues 268–303 (PSALRVYGQYLNLDKDHNGMLSKEELSRYGTGTLTC) and 336–371 (KEPAALQYIFKLLDIENKGSLNVFSLNFFFRAIQEQ). Residues D281, D283, N285, M287, and E292 each contribute to the Ca(2+) site.

The protein resides in the nucleus. It is found in the cytoplasm. Its function is as follows. Possible role in the regulation of cell death. In Xenopus tropicalis (Western clawed frog), this protein is Serine/threonine-protein phosphatase 2A regulatory subunit B'' subunit gamma (ppp2r3c).